The following is a 207-amino-acid chain: ADP-ribose pyrophosphatase (207 aa).

Substrate contacts are provided by residues 37 to 38 and Arg64; that span reads RE. Residues 41–172 form the Nudix hydrolase domain; the sequence is EHFGAVAIVA…EIVNSIAIAG (132 aa). Residue Ala76 coordinates Mg(2+). Residues 77–99 carry the Nudix box motif; that stretch reads GLLDVAGEPPHLTAARELREEVG. A substrate-binding site is contributed by Leu78. Mg(2+) is bound by residues Glu93 and Glu97. Residues 114–116 and Glu120 each bind substrate; that span reads APG. Glu142 is a Mg(2+) binding site. Glu142 (proton acceptor) is an active-site residue.

Belongs to the Nudix hydrolase family. As to quaternary structure, homodimer. The cofactor is Mg(2+). Mn(2+) serves as cofactor.

The catalysed reaction is ADP-D-ribose + H2O = D-ribose 5-phosphate + AMP + 2 H(+). It catalyses the reaction 8-oxo-dGDP + H2O = 8-oxo-dGMP + phosphate + H(+). The enzyme catalyses 8-oxo-GDP + H2O = 8-oxo-GMP + phosphate + H(+). In terms of biological role, catalyzes the hydrolysis of ADP-ribose (ADPR) to AMP and ribose-5-phosphate. Can also hydrolyze ADP-mannose and ADP-glucose, with lower efficiency. Has weaker activity with NAD, GDP-sugars and UDP-sugars. Also catalyzes the conversion of 8-oxo-dGDP to 8-oxo-dGMP, and 8-oxo-GDP to 8-oxo-GMP. Functions in concert with MutT1 to detoxify 8-oxo-dGTP to 8-oxo-dGMP and may play an important role in supporting cellular growth under oxidative stress. The catalytic efficiency is much higher for the hydrolysis of ADPR than 8-oxo-dGTP, suggesting a more relevant biological role in hydrolysis of ADPR. This is ADP-ribose pyrophosphatase from Mycobacterium tuberculosis (strain ATCC 25618 / H37Rv).